The primary structure comprises 283 residues: Acetyl-coenzyme A carboxylase carboxyl transferase subunit beta (283 aa).

Positions 27–283 (VWVKCERCGE…LLDLHLRGEK (257 aa)) constitute a CoA carboxyltransferase N-terminal domain. Zn(2+) contacts are provided by cysteine 31, cysteine 34, cysteine 50, and cysteine 53. The C4-type zinc-finger motif lies at 31-53 (CERCGEILFKKELDKNYKVCLKC).

It belongs to the AccD/PCCB family. As to quaternary structure, acetyl-CoA carboxylase is a heterohexamer composed of biotin carboxyl carrier protein (AccB), biotin carboxylase (AccC) and two subunits each of ACCase subunit alpha (AccA) and ACCase subunit beta (AccD). Requires Zn(2+) as cofactor.

It localises to the cytoplasm. It catalyses the reaction N(6)-carboxybiotinyl-L-lysyl-[protein] + acetyl-CoA = N(6)-biotinyl-L-lysyl-[protein] + malonyl-CoA. Its pathway is lipid metabolism; malonyl-CoA biosynthesis; malonyl-CoA from acetyl-CoA: step 1/1. Functionally, component of the acetyl coenzyme A carboxylase (ACC) complex. Biotin carboxylase (BC) catalyzes the carboxylation of biotin on its carrier protein (BCCP) and then the CO(2) group is transferred by the transcarboxylase to acetyl-CoA to form malonyl-CoA. The polypeptide is Acetyl-coenzyme A carboxylase carboxyl transferase subunit beta (Pelotomaculum thermopropionicum (strain DSM 13744 / JCM 10971 / SI)).